A 75-amino-acid polypeptide reads, in one-letter code: DNA-directed RNA polymerase subunit Rpo5 (75 aa).

It belongs to the archaeal Rpo5/eukaryotic RPB5 RNA polymerase subunit family. In terms of assembly, part of the RNA polymerase complex.

It is found in the cytoplasm. The catalysed reaction is RNA(n) + a ribonucleoside 5'-triphosphate = RNA(n+1) + diphosphate. In terms of biological role, DNA-dependent RNA polymerase (RNAP) catalyzes the transcription of DNA into RNA using the four ribonucleoside triphosphates as substrates. The chain is DNA-directed RNA polymerase subunit Rpo5 from Halobacterium salinarum (strain ATCC 700922 / JCM 11081 / NRC-1) (Halobacterium halobium).